We begin with the raw amino-acid sequence, 128 residues long: Protein 2B* (128 aa).

Disordered regions lie at residues 1 to 27 (PFMFRPRKQVFPDPRSGSVINGSNPTA) and 92 to 128 (RDDNSSDASGPFDSALLRNIDGRRDYKPDKSVRRNSS). The span at 18 to 27 (SVINGSNPTA) shows a compositional bias: polar residues. Basic and acidic residues predominate over residues 111–128 (IDGRRDYKPDKSVRRNSS).

It belongs to the encephalomyocarditis virus protein 2B* family.

In Aotus trivirgatus (Three-striped night monkey), this protein is Protein 2B*.